A 472-amino-acid chain; its full sequence is Phenylalanine--tRNA ligase, mitochondrial (472 aa).

Residues 157–160 (SAHQ), Arg-179, 186–188 (QHY), and 193–195 (QLE) contribute to the substrate site. Residue Lys-202 is modified to N6-acetyllysine. Substrate is bound by residues Glu-287 and Phe-312. The 93-residue stretch at 379-471 (SKYPAVFNDI…AVQLLGVEGR (93 aa)) folds into the FDX-ACB domain.

It belongs to the class-II aminoacyl-tRNA synthetase family. In terms of assembly, monomer. As to expression, mainly expressed in the Purkinje cell of cerebellum.

It localises to the mitochondrion matrix. It is found in the mitochondrion. It carries out the reaction tRNA(Phe) + L-phenylalanine + ATP = L-phenylalanyl-tRNA(Phe) + AMP + diphosphate + H(+). Is responsible for the charging of tRNA(Phe) with phenylalanine in mitochondrial translation. To a lesser extent, also catalyzes direct attachment of m-Tyr (an oxidized version of Phe) to tRNA(Phe), thereby opening the way for delivery of the misacylated tRNA to the ribosome and incorporation of ROS-damaged amino acid into proteins. The sequence is that of Phenylalanine--tRNA ligase, mitochondrial (Fars2) from Rattus norvegicus (Rat).